The chain runs to 323 residues: Cuticle collagen 39 (323 aa).

The first 28 residues, 1–28, serve as a signal peptide directing secretion; that stretch reads MTGPTCLAVVAGISGVFVFGALFSVAQI. The span at 80–89 shows a compositional bias: polar residues; that stretch reads QCNCGPQASN. The disordered stretch occupies residues 80-293; sequence QCNCGPQASN…GAAEQGYRHR (214 aa). Triple-helical region regions lie at residues 93–125, 138–200, and 203–265; these read GPPG…AGPK, GSPG…GGQR, and GLPG…PGAD. Residues 108 to 117 show a composition bias toward gly residues; sequence GQPGGAGNPG. Residues 136 to 146 are compositionally biased toward low complexity; the sequence is PAGSPGPAGAP. The span at 159 to 168 shows a compositional bias: gly residues; it reads GHPGQGGSQG. Residues 169–191 are compositionally biased toward low complexity; the sequence is PAGPRGPAGDAGAPGQVGAPGNP. Residues 224–233 show a composition bias toward gly residues; that stretch reads GQSGGQGQQG. Low complexity predominate over residues 234–267; the sequence is PAGPAGPDGQPGQPGQDGQAGAPGNDGAPGADAA.

Belongs to the cuticular collagen family. Collagen polypeptide chains are complexed within the cuticle by disulfide bonds and other types of covalent cross-links.

Nematode cuticles are composed largely of collagen-like proteins. The cuticle functions both as an exoskeleton and as a barrier to protect the worm from its environment. This Caenorhabditis elegans protein is Cuticle collagen 39 (col-39).